The following is a 90-amino-acid chain: Large ribosomal subunit protein eL37 (90 aa).

Cys-19, Cys-22, Cys-34, and Cys-37 together coordinate Zn(2+). The segment at 19 to 37 adopts a C4-type zinc-finger fold; it reads CRRCGRQSYHKQKNSCSSC. Residues 21–31 are compositionally biased toward basic residues; the sequence is RCGRQSYHKQK. Residues 21–59 are disordered; sequence RCGRQSYHKQKNSCSSCGYPNPKMRNPGSIKARRRRTIG.

Belongs to the eukaryotic ribosomal protein eL37 family. Zn(2+) serves as cofactor.

In terms of biological role, binds to the 23S rRNA. The chain is Large ribosomal subunit protein eL37 (RPL37) from Encephalitozoon cuniculi (strain GB-M1) (Microsporidian parasite).